Here is a 3165-residue protein sequence, read N- to C-terminus: Protein eyes shut homolog (3165 aa).

A signal peptide spans 1-21; it reads MTDKSIVILSLMVFHSSFING. Residue asparagine 166 is glycosylated (N-linked (GlcNAc...) asparagine). 3 EGF-like domains span residues 170 to 212, 213 to 254, and 256 to 292; these read KQQF…KYCQ, ELDA…KNCS, and IIGQ…PFCE. 9 disulfides stabilise this stretch: cysteine 174–cysteine 189, cysteine 183–cysteine 200, cysteine 202–cysteine 211, cysteine 217–cysteine 228, cysteine 222–cysteine 242, cysteine 244–cysteine 253, cysteine 260–cysteine 270, cysteine 265–cysteine 280, and cysteine 282–cysteine 291. Residues asparagine 269 and asparagine 272 are each glycosylated (N-linked (GlcNAc...) asparagine). 2 N-linked (GlcNAc...) asparagine glycosylation sites follow: asparagine 311 and asparagine 343. EGF-like domains lie at 332 to 368 and 370 to 406; these read DVSE…LLCK and IQTS…KNCE. Cystine bridges form between cysteine 341–cysteine 356, cysteine 358–cysteine 367, cysteine 374–cysteine 385, and cysteine 396–cysteine 405. 2 N-linked (GlcNAc...) asparagine glycosylation sites follow: asparagine 506 and asparagine 566. EGF-like domains are found at residues 567-602 and 643-679; these read TTDD…RLCV and DTED…TQCE. 46 disulfide bridges follow: cysteine 575–cysteine 590, cysteine 592–cysteine 601, cysteine 669–cysteine 678, cysteine 685–cysteine 696, cysteine 690–cysteine 705, cysteine 707–cysteine 719, cysteine 737–cysteine 748, cysteine 742–cysteine 757, cysteine 759–cysteine 768, cysteine 775–cysteine 786, cysteine 780–cysteine 795, cysteine 797–cysteine 806, cysteine 813–cysteine 824, cysteine 818–cysteine 835, cysteine 837–cysteine 846, cysteine 853–cysteine 866, cysteine 860–cysteine 876, cysteine 878–cysteine 887, cysteine 894–cysteine 905, cysteine 899–cysteine 914, cysteine 916–cysteine 925, cysteine 932–cysteine 943, cysteine 937–cysteine 952, cysteine 954–cysteine 963, cysteine 970–cysteine 981, cysteine 975–cysteine 990, cysteine 992–cysteine 1001, cysteine 1008–cysteine 1019, cysteine 1013–cysteine 1028, cysteine 1030–cysteine 1039, cysteine 1046–cysteine 1056, cysteine 1051–cysteine 1065, cysteine 1067–cysteine 1076, cysteine 1083–cysteine 1094, cysteine 1088–cysteine 1103, cysteine 1105–cysteine 1114, cysteine 1121–cysteine 1137, cysteine 1131–cysteine 1147, cysteine 1149–cysteine 1158, cysteine 1165–cysteine 1176, cysteine 1170–cysteine 1185, cysteine 1187–cysteine 1196, cysteine 2037–cysteine 2063, cysteine 2103–cysteine 2114, cysteine 2108–cysteine 2128, and cysteine 2130–cysteine 2139. Residues 681–720 enclose the EGF-like 8; calcium-binding domain; it reads DIDECASHPCKNGATCIDQPGNYFCQCVPPFKVVDGFSCL. Residues 733 to 769 form the EGF-like 9; calcium-binding domain; sequence DIDDCILNACEHNSTCKDLHLSYQCVCLSDWEGNFCE. Residues 771–807 enclose the EGF-like 10; calcium-binding domain; that stretch reads ESNECKMNPCKNNSTCTDLYKSYRCECTSGWTGQNCS. EGF-like domains are found at residues 809–847, 849–888, and 890–926; these read EINE…QFCH, RYNL…KNCE, and DVKD…SLCE. The EGF-like 14; calcium-binding domain occupies 928–964; that stretch reads EINECSSEPCKNNGTCVDLTNRFFCNCEPEYHGPFCE. One can recognise an EGF-like 15 domain in the interval 966–1002; the sequence is DVNKCKISPCLDEENCVYRTDGYNCLCAPGYTGINCE. The EGF-like 16; calcium-binding domain occupies 1004 to 1040; the sequence is NLDECLSEPCLHDGVCIDGINHYTCDCKSGFFGTHCE. EGF-like domains follow at residues 1042–1077, 1079–1115, and 1117–1159; these read NAND…TQCK, KIND…AYCE, and SIDN…QFCE. An EGF-like 20; calcium-binding domain is found at 1161–1197; the sequence is NINECSSSPCLHGADCEDHINGYVCKCQPGWSGHHCE. One can recognise a Laminin G-like 1 domain in the interval 1883–2063; sequence FSCVRYYGDS…AVKNYHINNC (181 aa). Residues 2099–2140 form the EGF-like 21 domain; sequence APSVCQQDVCHNGGTCHAIFLSSGIVSFQCDCPLHFTGRFCE. The Laminin G-like 2 domain occupies 2145-2339; sequence LFFPSFNGNS…NIENCHVPWC (195 aa). Residue asparagine 2170 is glycosylated (N-linked (GlcNAc...) asparagine). EGF-like domains follow at residues 2335–2368 and 2371–2408; these read HVPW…YSGK and QFAS…PLCT. Intrachain disulfides connect cysteine 2339–cysteine 2350, cysteine 2344–cysteine 2359, cysteine 2375–cysteine 2386, cysteine 2380–cysteine 2396, cysteine 2398–cysteine 2407, cysteine 2576–cysteine 2609, cysteine 2614–cysteine 2625, cysteine 2619–cysteine 2634, cysteine 2636–cysteine 2645, cysteine 2652–cysteine 2668, cysteine 2662–cysteine 2677, cysteine 2679–cysteine 2688, cysteine 2868–cysteine 2895, cysteine 2900–cysteine 2911, cysteine 2905–cysteine 2920, cysteine 2922–cysteine 2931, cysteine 2937–cysteine 2948, cysteine 2942–cysteine 2958, and cysteine 2960–cysteine 2969. One can recognise a Laminin G-like 3 domain in the interval 2419 to 2609; that stretch reads SGTDAFGYTS…PNAGRSVGQC (191 aa). EGF-like domains are found at residues 2610 to 2646 and 2648 to 2689; these read HASP…SFCT and TVST…IYCE. In terms of domain architecture, Laminin G-like 4 spans 2717-2895; that stretch reads DPSFRSNELS…AKGGSNVGDC (179 aa). 2 consecutive EGF-like domains span residues 2896 to 2932 and 2933 to 2970; these read DGTA…NTCN and QSVS…RYCE. The Laminin G-like 5 domain occupies 2975-3165; sequence FSTAKFMGNS…YDGDEQNEVT (191 aa).

The protein belongs to the EYS family. Expressed in retina (at protein level). Isoform 1: Detected in retina. Isoform 2: Detected in retina. Isoform 3: Strongly expressed in retina and testis. Isoform 4: Strongly expressed in testis, and weakly expressed in retina.

Its subcellular location is the cell projection. The protein resides in the cilium. It is found in the photoreceptor outer segment. It localises to the cytoplasm. The protein localises to the cytoskeleton. Its subcellular location is the cilium axoneme. The protein resides in the microtubule organizing center. It is found in the centrosome. It localises to the secreted. The protein localises to the extracellular space. Its subcellular location is the extracellular matrix. The protein resides in the interphotoreceptor matrix. Functionally, required to maintain the integrity of photoreceptor cells. Specifically required for normal morphology of the photoreceptor ciliary pocket, and might thus facilitate protein trafficking between the photoreceptor inner and outer segments via the transition zone. This chain is Protein eyes shut homolog (EYS), found in Homo sapiens (Human).